The primary structure comprises 407 residues: Rubber oxygenase (407 aa).

Residues 1–30 (MDGFSRRRMLMTGGALGAVGALGAATRALA) constitute a signal peptide (tat-type signal). His198 is a heme binding site.

It belongs to the rubber oxygenase Lcp family. Heme b serves as cofactor. Post-translationally, exported by the Tat system. The position of the signal peptide cleavage has not been experimentally proven.

It localises to the secreted. It participates in biopolymer metabolism. Involved in the initial step of rubber degradation. Catalyzes the oxidative C-C cleavage of poly(cis-1,4-isoprene) in synthetic as well as in natural rubber by the addition of oxygen (O2) to the double bonds, leading to a mixture of oligonucleotide-isoprenoids with terminal keto and aldehyde groups (endo-type cleavage). The cleavage products are of different lengths, ranging from C20 (four isoprene units) to higher oligo-isoprenoids. Is not able to cleave low-molecular-weight substrate analogs with isoprenoid structure such as squalene (1,4-trans-isoprenoid), carotenoids, or alpha-tocopherol. The chain is Rubber oxygenase from Streptomyces sp. (strain K30).